We begin with the raw amino-acid sequence, 599 residues long: Endo-1,4-beta-xylanase B (599 aa).

The signal sequence occupies residues 1–37; the sequence is MTISASDYRHPGNFLKRTTALLCVGTALTALAFNASA. Residues 38 to 136 form the CBM2 domain; that stretch reads ACTYTIDSEW…TVTGAACNSA (99 aa). A disulfide bond links C39 and C133. Residues 163-289 form the CBM6 domain; sequence LLQEAQAGFC…LPNIDSLSVV (127 aa). The 281-residue stretch at 315–595 folds into the GH10 domain; that stretch reads SSSAASAKKF…RPAMTWLINN (281 aa). The Proton donor role is filled by E431. E530 acts as the Nucleophile in catalysis.

Belongs to the glycosyl hydrolase 10 (cellulase F) family.

It catalyses the reaction Endohydrolysis of (1-&gt;4)-beta-D-xylosidic linkages in xylans.. Its pathway is glycan metabolism; hemicellulose degradation. In terms of biological role, xylanase B contributes to hydrolyze hemicellulose, the major component of plant cell-walls. In Cellvibrio japonicus (strain Ueda107) (Pseudomonas fluorescens subsp. cellulosa), this protein is Endo-1,4-beta-xylanase B (xynB).